A 485-amino-acid chain; its full sequence is Ribulose bisphosphate carboxylase large chain 2 (485 aa).

Substrate contacts are provided by Asn125 and Thr175. Lys177 acts as the Proton acceptor in catalysis. Lys179 lines the substrate pocket. Residues Lys203, Asp205, and Glu206 each coordinate Mg(2+). The residue at position 203 (Lys203) is an N6-carboxylysine. His295 (proton acceptor) is an active-site residue. Residues Arg296, His328, and Ser380 each contribute to the substrate site.

It belongs to the RuBisCO large chain family. Type I subfamily. As to quaternary structure, heterohexadecamer of 8 large chains and 8 small chains. The cofactor is Mg(2+).

It carries out the reaction 2 (2R)-3-phosphoglycerate + 2 H(+) = D-ribulose 1,5-bisphosphate + CO2 + H2O. The enzyme catalyses D-ribulose 1,5-bisphosphate + O2 = 2-phosphoglycolate + (2R)-3-phosphoglycerate + 2 H(+). Its function is as follows. RuBisCO catalyzes two reactions: the carboxylation of D-ribulose 1,5-bisphosphate, the primary event in carbon dioxide fixation, as well as the oxidative fragmentation of the pentose substrate. Both reactions occur simultaneously and in competition at the same active site. The protein is Ribulose bisphosphate carboxylase large chain 2 of Methylibium petroleiphilum (strain ATCC BAA-1232 / LMG 22953 / PM1).